The following is a 299-amino-acid chain: Neomycin C epimerase (299 aa).

Residues 10 to 222 (PVRQVRAYRN…WNHIFETGRR (213 aa)) form the Radical SAM core domain. Residues Cys-26, Cys-30, Cys-33, Cys-226, and Cys-247 each contribute to the [4Fe-4S] cluster site. The active-site Proton donor is Cys-249. Residues Cys-271 and Cys-274 each contribute to the [4Fe-4S] cluster site.

This sequence belongs to the radical SAM superfamily. It depends on [4Fe-4S] cluster as a cofactor.

The enzyme catalyses neomycin C + AH2 + S-adenosyl-L-methionine = neomycin B + 5'-deoxyadenosine + L-methionine + A + H(+). The protein operates within antibiotic biosynthesis; neomycin biosynthesis. In terms of biological role, catalyzes the last step of neomycin B biosynthesis, i.e. the irreversible epimerization at C-5''' of neomycin C to give neomycin B. To a lesser extent, is also able to convert neomycin Y2 to neomycin Y1. The polypeptide is Neomycin C epimerase (Streptomyces fradiae (Streptomyces roseoflavus)).